The following is a 312-amino-acid chain: Pantothenate kinase (312 aa).

Gly92 to Ser99 contacts ATP.

It belongs to the prokaryotic pantothenate kinase family.

The protein resides in the cytoplasm. It catalyses the reaction (R)-pantothenate + ATP = (R)-4'-phosphopantothenate + ADP + H(+). Its pathway is cofactor biosynthesis; coenzyme A biosynthesis; CoA from (R)-pantothenate: step 1/5. This chain is Pantothenate kinase (coaA), found in Vibrio cholerae serotype O1 (strain ATCC 39315 / El Tor Inaba N16961).